A 118-amino-acid chain; its full sequence is Ribonuclease P protein component (118 aa).

It belongs to the RnpA family. Consists of a catalytic RNA component (M1 or rnpB) and a protein subunit.

It carries out the reaction Endonucleolytic cleavage of RNA, removing 5'-extranucleotides from tRNA precursor.. Its function is as follows. RNaseP catalyzes the removal of the 5'-leader sequence from pre-tRNA to produce the mature 5'-terminus. It can also cleave other RNA substrates such as 4.5S RNA. The protein component plays an auxiliary but essential role in vivo by binding to the 5'-leader sequence and broadening the substrate specificity of the ribozyme. The polypeptide is Ribonuclease P protein component (Ureaplasma urealyticum serovar 10 (strain ATCC 33699 / Western)).